Reading from the N-terminus, the 244-residue chain is MKHQDVAIIIPSRLSSTRLTRKPLQLIGSSTLIERVFKQVNQTNLEHIYVATDSQEIASVIEKLGGKVIFTDSNIPTGTDRTYEAFKLIPNNQNINYIVNVQGDMPFIEPESILKVIEDLKNSKYDIVTPVVKVEKDSVEAASNVTVAIDSKGKAIYFSRSLIPNGAEEFLYHVGMYGFRKSALERFVALEPTFLEKTERLEQLRLLENGMTIGTCLVNNVPISVDTPEDLSKAVKFYEKSKLV.

The protein belongs to the KdsB family.

It localises to the cytoplasm. It catalyses the reaction 3-deoxy-alpha-D-manno-oct-2-ulosonate + CTP = CMP-3-deoxy-beta-D-manno-octulosonate + diphosphate. The protein operates within nucleotide-sugar biosynthesis; CMP-3-deoxy-D-manno-octulosonate biosynthesis; CMP-3-deoxy-D-manno-octulosonate from 3-deoxy-D-manno-octulosonate and CTP: step 1/1. It functions in the pathway bacterial outer membrane biogenesis; lipopolysaccharide biosynthesis. Its function is as follows. Activates KDO (a required 8-carbon sugar) for incorporation into bacterial lipopolysaccharide in Gram-negative bacteria. The chain is 3-deoxy-manno-octulosonate cytidylyltransferase from Rickettsia bellii (strain OSU 85-389).